The primary structure comprises 548 residues: Chaperonin GroEL (548 aa).

ATP-binding positions include 30–33, K51, 87–91, G415, 479–481, and D495; these read TLGP, DGTTT, and NAA.

It belongs to the chaperonin (HSP60) family. Forms a cylinder of 14 subunits composed of two heptameric rings stacked back-to-back. Interacts with the co-chaperonin GroES.

It is found in the cytoplasm. It catalyses the reaction ATP + H2O + a folded polypeptide = ADP + phosphate + an unfolded polypeptide.. Functionally, together with its co-chaperonin GroES, plays an essential role in assisting protein folding. The GroEL-GroES system forms a nano-cage that allows encapsulation of the non-native substrate proteins and provides a physical environment optimized to promote and accelerate protein folding. The protein is Chaperonin GroEL of Ectopseudomonas mendocina (strain ymp) (Pseudomonas mendocina).